The sequence spans 302 residues: Bifunctional protein FolD (302 aa).

NADP(+)-binding positions include 171–173 (GRS), serine 196, and isoleucine 237.

This sequence belongs to the tetrahydrofolate dehydrogenase/cyclohydrolase family. In terms of assembly, homodimer.

It catalyses the reaction (6R)-5,10-methylene-5,6,7,8-tetrahydrofolate + NADP(+) = (6R)-5,10-methenyltetrahydrofolate + NADPH. The catalysed reaction is (6R)-5,10-methenyltetrahydrofolate + H2O = (6R)-10-formyltetrahydrofolate + H(+). It participates in one-carbon metabolism; tetrahydrofolate interconversion. Catalyzes the oxidation of 5,10-methylenetetrahydrofolate to 5,10-methenyltetrahydrofolate and then the hydrolysis of 5,10-methenyltetrahydrofolate to 10-formyltetrahydrofolate. The polypeptide is Bifunctional protein FolD (Sphingopyxis alaskensis (strain DSM 13593 / LMG 18877 / RB2256) (Sphingomonas alaskensis)).